Consider the following 497-residue polypeptide: Uridine 5'-monophosphate synthase (497 aa).

The segment at 8–226 (TRNGALKRNL…KLEINSELEN (219 aa)) is OPRTase. The tract at residues 227–232 (LSSLPY) is domain linker. The interval 233-496 (VENVRTPLAE…WDALTRSDDS (264 aa)) is OMPdecase. UMP contacts are provided by residues Asp271 and 293 to 295 (KLH). Lys293 lines the orotidine 5'-phosphate pocket. Residues Asp324, Lys326, and Asp329 each act as for OMPdecase activity in the active site. Residues Lys326, Asp329, Thr333, Ser387, 446-448 (QQW), and 466-467 (GR) contribute to the orotidine 5'-phosphate site. Residues Asp329, Thr333, Ser387, 446 to 448 (QQW), and 466 to 467 (GR) contribute to the UMP site.

It in the N-terminal section; belongs to the purine/pyrimidine phosphoribosyltransferase family. The protein in the C-terminal section; belongs to the OMP decarboxylase family. Expressed in intestine and in neurons near the nerve ring and rectum.

It localises to the cytoplasm. It catalyses the reaction orotidine 5'-phosphate + diphosphate = orotate + 5-phospho-alpha-D-ribose 1-diphosphate. The enzyme catalyses orotidine 5'-phosphate + H(+) = UMP + CO2. It functions in the pathway pyrimidine metabolism; UMP biosynthesis via de novo pathway; UMP from orotate: step 1/2. The protein operates within pyrimidine metabolism; UMP biosynthesis via de novo pathway; UMP from orotate: step 2/2. In terms of biological role, bifunctional enzyme which catalyzes the formation of UMP from orotate in the de novo pathway of pyrimidine biosynthesis. May also form UMP from uracil. Regulates the size of gut granules during embryonic development. Involved in resistance to DNA damaging agents including UV-C and X-ray radiation. This chain is Uridine 5'-monophosphate synthase, found in Caenorhabditis elegans.